A 318-amino-acid chain; its full sequence is Thymidylate synthase (318 aa).

DUMP-binding positions include Arg-25 and 180–181; that span reads RR. The active-site Nucleophile is Cys-200. Residues 220–223, Asn-231, and 261–263 each bind dUMP; these read RSGD and HIY. Asp-223 is a binding site for (6R)-5,10-methylene-5,6,7,8-tetrahydrofolate. Ala-317 contributes to the (6R)-5,10-methylene-5,6,7,8-tetrahydrofolate binding site.

It belongs to the thymidylate synthase family. Bacterial-type ThyA subfamily. As to quaternary structure, homodimer.

The protein resides in the cytoplasm. It catalyses the reaction dUMP + (6R)-5,10-methylene-5,6,7,8-tetrahydrofolate = 7,8-dihydrofolate + dTMP. It participates in pyrimidine metabolism; dTTP biosynthesis. Catalyzes the reductive methylation of 2'-deoxyuridine-5'-monophosphate (dUMP) to 2'-deoxythymidine-5'-monophosphate (dTMP) while utilizing 5,10-methylenetetrahydrofolate (mTHF) as the methyl donor and reductant in the reaction, yielding dihydrofolate (DHF) as a by-product. This enzymatic reaction provides an intracellular de novo source of dTMP, an essential precursor for DNA biosynthesis. This Bacillus cytotoxicus (strain DSM 22905 / CIP 110041 / 391-98 / NVH 391-98) protein is Thymidylate synthase.